We begin with the raw amino-acid sequence, 296 residues long: Probable lipid kinase YegS-like (296 aa).

In terms of domain architecture, DAGKc spans M1–H130. ATP is bound by residues T37, G63–E69, and T92. Mg(2+)-binding residues include L212, D215, and L217. E268 (proton acceptor) is an active-site residue.

Belongs to the diacylglycerol/lipid kinase family. YegS lipid kinase subfamily. Requires Mg(2+) as cofactor. It depends on Ca(2+) as a cofactor.

It localises to the cytoplasm. Functionally, probably phosphorylates lipids; the in vivo substrate is unknown. The sequence is that of Probable lipid kinase YegS-like from Yersinia pseudotuberculosis serotype I (strain IP32953).